The primary structure comprises 241 residues: Methylosome subunit pICln (241 aa).

The tract at residues Glu88–Ile112 is disordered. Residues Gln97–Ile112 are compositionally biased toward acidic residues.

It belongs to the pICln (TC 1.A.47) family. In terms of assembly, component of the methylosome, a 20S complex containing at least clns1a/picln, prmt5/skb1 and wdr77/mep50; may mediate snrpd1 and snrpd3 methylation. Forms a 6S pICln-Sm complex composed of clns1a/picln, snrpd1, snrpd2, snrpe, snrpf and snrpg; ring-like structure where clns1a/pICln mimics additional Sm proteins and which is unable to assemble into the core snRNP.

It is found in the cytoplasm. The protein resides in the cytosol. Its subcellular location is the nucleus. It localises to the cytoskeleton. Functionally, involved in both the assembly of spliceosomal snRNPs and the methylation of Sm proteins. Chaperone that regulates the assembly of spliceosomal U1, U2, U4 and U5 small nuclear ribonucleoproteins (snRNPs), the building blocks of the spliceosome, and thereby plays an important role in the splicing of cellular pre-mRNAs. Most spliceosomal snRNPs contain a common set of Sm proteins SNRPB, SNRPD1, SNRPD2, SNRPD3, SNRPE, SNRPF and SNRPG that assemble in a heptameric protein ring on the Sm site of the small nuclear RNA to form the core snRNP (Sm core). In the cytosol, the Sm proteins SNRPD1, SNRPD2, SNRPE, SNRPF and SNRPG are trapped in an inactive 6S pICln-Sm complex by the chaperone CLNS1A that controls the assembly of the core snRNP. Dissociation by the SMN complex of CLNS1A from the trapped Sm proteins and their transfer to an SMN-Sm complex triggers the assembly of core snRNPs and their transport to the nucleus. This chain is Methylosome subunit pICln (clns1a), found in Xenopus laevis (African clawed frog).